The sequence spans 369 residues: RING-H2 finger protein ATL47 (369 aa).

Residues 52 to 72 (IILFIIVLLSVIFFICSILHL) form a helical membrane-spanning segment. The segment at 144 to 186 (CAVCLCEFSEDDKLRLLPNCSHAFHIDCIDTWLLSNSTCPLCR) adopts an RING-type; atypical zinc-finger fold. A disordered region spans residues 332 to 355 (NNHPSETNLVVGGSSSSSSYVCSG). Residues 341–355 (VVGGSSSSSSYVCSG) are compositionally biased toward low complexity.

Belongs to the RING-type zinc finger family. ATL subfamily.

The protein localises to the membrane. The catalysed reaction is S-ubiquitinyl-[E2 ubiquitin-conjugating enzyme]-L-cysteine + [acceptor protein]-L-lysine = [E2 ubiquitin-conjugating enzyme]-L-cysteine + N(6)-ubiquitinyl-[acceptor protein]-L-lysine.. The protein operates within protein modification; protein ubiquitination. This is RING-H2 finger protein ATL47 (ATL47) from Arabidopsis thaliana (Mouse-ear cress).